The sequence spans 554 residues: CTP synthase (554 aa).

Residues 1 to 279 form an amidoligase domain region; it reads MTSSRKVRPT…DTFIIRRLGL (279 aa). Ser-21 provides a ligand contact to CTP. A UTP-binding site is contributed by Ser-21. Residues 22 to 27 and Asp-79 each bind ATP; that span reads SLGKGL. Residues Asp-79 and Glu-153 each contribute to the Mg(2+) site. CTP contacts are provided by residues 160 to 162, 200 to 205, and Lys-236; these read DIE and KTKPTQ. UTP is bound by residues 200–205 and Lys-236; that span reads KTKPTQ. The Glutamine amidotransferase type-1 domain occupies 304–553; sequence TVGIVGKYID…VKTALELRVH (250 aa). Gly-367 is a binding site for L-glutamine. Residue Cys-394 is the Nucleophile; for glutamine hydrolysis of the active site. L-glutamine-binding positions include 395–398, Glu-417, and Arg-478; that span reads LGLQ. Catalysis depends on residues His-526 and Glu-528.

It belongs to the CTP synthase family. As to quaternary structure, homotetramer.

The enzyme catalyses UTP + L-glutamine + ATP + H2O = CTP + L-glutamate + ADP + phosphate + 2 H(+). It carries out the reaction L-glutamine + H2O = L-glutamate + NH4(+). It catalyses the reaction UTP + NH4(+) + ATP = CTP + ADP + phosphate + 2 H(+). It functions in the pathway pyrimidine metabolism; CTP biosynthesis via de novo pathway; CTP from UDP: step 2/2. Its activity is regulated as follows. Allosterically activated by GTP, when glutamine is the substrate; GTP has no effect on the reaction when ammonia is the substrate. The allosteric effector GTP functions by stabilizing the protein conformation that binds the tetrahedral intermediate(s) formed during glutamine hydrolysis. Inhibited by the product CTP, via allosteric rather than competitive inhibition. Catalyzes the ATP-dependent amination of UTP to CTP with either L-glutamine or ammonia as the source of nitrogen. Regulates intracellular CTP levels through interactions with the four ribonucleotide triphosphates. The protein is CTP synthase of Corynebacterium glutamicum (strain R).